We begin with the raw amino-acid sequence, 301 residues long: Sulfate adenylyltransferase subunit 2 (301 aa).

The protein belongs to the PAPS reductase family. CysD subfamily. Heterodimer composed of CysD, the smaller subunit, and CysN.

The enzyme catalyses sulfate + ATP + H(+) = adenosine 5'-phosphosulfate + diphosphate. The protein operates within sulfur metabolism; hydrogen sulfide biosynthesis; sulfite from sulfate: step 1/3. With CysN forms the ATP sulfurylase (ATPS) that catalyzes the adenylation of sulfate producing adenosine 5'-phosphosulfate (APS) and diphosphate, the first enzymatic step in sulfur assimilation pathway. APS synthesis involves the formation of a high-energy phosphoric-sulfuric acid anhydride bond driven by GTP hydrolysis by CysN coupled to ATP hydrolysis by CysD. This Shewanella woodyi (strain ATCC 51908 / MS32) protein is Sulfate adenylyltransferase subunit 2.